Reading from the N-terminus, the 399-residue chain is uncharacterized protein (399 aa).

It belongs to the NADH:flavin oxidoreductase/NADH oxidase family. In terms of assembly, directly interacts with lipoylated GcvH-L (SpyM50867).

This is an uncharacterized protein from Streptococcus pyogenes serotype M5 (strain Manfredo).